A 910-amino-acid chain; its full sequence is E3 ubiquitin-protein ligase HUL5 (910 aa).

Methionine 1 bears the N-acetylmethionine mark. Residues 1-25 form a disordered region; sequence MLNFTGQTRRRNVNLGNRTRNSKKD. Residues 810–910 enclose the HECT domain; sequence YGGYKEEDQT…INSGARFDLS (101 aa). Cysteine 878 (glycyl thioester intermediate) is an active-site residue.

It belongs to the UBE3C family. As to quaternary structure, interacts with 19S proteasomes.

The protein resides in the cytoplasm. The protein localises to the cytosol. It localises to the nucleus. It carries out the reaction S-ubiquitinyl-[E2 ubiquitin-conjugating enzyme]-L-cysteine + [acceptor protein]-L-lysine = [E2 ubiquitin-conjugating enzyme]-L-cysteine + N(6)-ubiquitinyl-[acceptor protein]-L-lysine.. The protein operates within protein modification; protein ubiquitination. Its function is as follows. Non-essential E3 ubiquitin-protein ligase that specifically catalyzes 'Lys-29'- and 'Lys-48'-linked polyubiquitin chains. Accepts ubiquitin from an E2 ubiquitin-conjugating enzyme in the form of a thioester and then directly transfers the ubiquitin to targeted substrates. Associates with the proteasome and promotes elongation of ubiquitin chains on substrates bound to the proteasome. Elongation of ubiquitin chains on substrates bound to the proteasome promotes proteasomal processivity. Also promotes ubiquitin elongation of 26S proteasome subunit RPN10. Involved in the stress response required to maintain cell fitness following heat-shock: acts by mediating ubiquitination of cytosolic misfolded proteins, leading to their subsequent degradation. The protein is E3 ubiquitin-protein ligase HUL5 of Saccharomyces cerevisiae (strain ATCC 204508 / S288c) (Baker's yeast).